The following is a 214-amino-acid chain: ATP phosphoribosyltransferase (214 aa).

The protein belongs to the ATP phosphoribosyltransferase family. Short subfamily. In terms of assembly, heteromultimer composed of HisG and HisZ subunits.

Its subcellular location is the cytoplasm. It carries out the reaction 1-(5-phospho-beta-D-ribosyl)-ATP + diphosphate = 5-phospho-alpha-D-ribose 1-diphosphate + ATP. The protein operates within amino-acid biosynthesis; L-histidine biosynthesis; L-histidine from 5-phospho-alpha-D-ribose 1-diphosphate: step 1/9. In terms of biological role, catalyzes the condensation of ATP and 5-phosphoribose 1-diphosphate to form N'-(5'-phosphoribosyl)-ATP (PR-ATP). Has a crucial role in the pathway because the rate of histidine biosynthesis seems to be controlled primarily by regulation of HisG enzymatic activity. This chain is ATP phosphoribosyltransferase, found in Alcanivorax borkumensis (strain ATCC 700651 / DSM 11573 / NCIMB 13689 / SK2).